Consider the following 328-residue polypeptide: GMP reductase (328 aa).

Catalysis depends on Cys176, which acts as the Thioimidate intermediate. Residue 205-228 coordinates NADP(+); that stretch reads IIADGGIRTHGDVAKSIRFGATMV.

It belongs to the IMPDH/GMPR family. GuaC type 2 subfamily.

The catalysed reaction is IMP + NH4(+) + NADP(+) = GMP + NADPH + 2 H(+). Functionally, catalyzes the irreversible NADPH-dependent deamination of GMP to IMP. It functions in the conversion of nucleobase, nucleoside and nucleotide derivatives of G to A nucleotides, and in maintaining the intracellular balance of A and G nucleotides. The polypeptide is GMP reductase (Bacillus cereus (strain ATCC 14579 / DSM 31 / CCUG 7414 / JCM 2152 / NBRC 15305 / NCIMB 9373 / NCTC 2599 / NRRL B-3711)).